The primary structure comprises 572 residues: Hexokinase (572 aa).

Residues 49–492 (DEPPISLETV…SGKGAALITA (444 aa)) enclose the Hexokinase domain. A hexokinase small subdomain region spans residues 105–237 (NGTEEGRFIA…DIKVEVVALI (133 aa)). D-glucose 6-phosphate contacts are provided by residues 116–120 (DLGGT) and S185. Residue 116 to 121 (DLGGTN) participates in ATP binding. Substrate contacts are provided by residues 185–186 (SY), 202–203 (TK), and 238–239 (ND). Residues 238-481 (NDTVGTMVAA…LKFKLLQTAD (244 aa)) form a hexokinase large subdomain region. 2 residues coordinate D-glucose 6-phosphate: D239 and T263. T263 is an ATP binding site. Residues N266, E297, and D331 each contribute to the substrate site. Residues 336–337 (GK), 373–377 (TKYIS), and 448–452 (STYKY) contribute to the ATP site. Residues 446 to 448 (DGS) and S483 each bind D-glucose 6-phosphate.

Belongs to the hexokinase family.

The enzyme catalyses a D-hexose + ATP = a D-hexose 6-phosphate + ADP + H(+). The catalysed reaction is D-mannose + ATP = D-mannose 6-phosphate + ADP + H(+). It carries out the reaction D-fructose + ATP = D-fructose 6-phosphate + ADP + H(+). It catalyses the reaction D-glucose + ATP = D-glucose 6-phosphate + ADP + H(+). The protein operates within carbohydrate metabolism; hexose metabolism. It participates in carbohydrate degradation; glycolysis; D-glyceraldehyde 3-phosphate and glycerone phosphate from D-glucose: step 1/4. With respect to regulation, activated by glucose-6-phosphate. Inhibited by N-acetylglucosamine, glucosamine, mannoheptulose and ADP. Its function is as follows. Active against glucose, fructose, mannose, maltose and galactose. This chain is Hexokinase, found in Brugia malayi (Filarial nematode worm).